The sequence spans 194 residues: Fatty acid metabolism regulator protein (194 aa).

The 61-residue stretch at 5 to 65 (RPKYMQIIDA…SLFKEKMGQF (61 aa)) folds into the HTH tetR-type domain. A DNA-binding region (H-T-H motif) is located at residues 28 to 47 (QVSKIAKQAGVADGTIYLYF).

Homodimer. Binds to DNA.

It is found in the cytoplasm. In terms of biological role, transcriptional regulator in fatty acid degradation. Represses transcription of genes required for fatty acid transport and beta-oxidation, including acdA, fadA, fadB, fadE, fadF, fadG, fadH, fadM, fadN, lcfA and lcfB. Binding of FadR to DNA is specifically inhibited by long chain fatty acyl-CoA compounds of 14-20 carbon atoms in length. The polypeptide is Fatty acid metabolism regulator protein (fadR) (Bacillus subtilis (strain 168)).